Consider the following 340-residue polypeptide: Guanine nucleotide-binding protein G(I)/G(S)/G(T) subunit beta-1 (340 aa).

Serine 2 is subject to N-acetylserine. A Phosphoserine modification is found at serine 2. WD repeat units lie at residues arginine 46–proline 94, leucine 95–alanine 140, glycine 141–threonine 181, glycine 182–threonine 223, glycine 224–aspartate 267, asparagine 268–alanine 309, and glycine 310–asparagine 340. The residue at position 266 (histidine 266) is a Phosphohistidine.

This sequence belongs to the WD repeat G protein beta family. As to quaternary structure, g proteins are composed of 3 units, alpha, beta and gamma. The heterodimer formed by GNB1 and GNG2 interacts with ARHGEF5. The heterodimer formed by GNB1 and GNG2 interacts with GRK2. Forms a complex with GNAO1 and GNG3. Interacts with ARHGEF18 and RASD2. Forms complexes with TAS2R14 and G-proteins; these complexes play a role in the perception of bitterness. Component of the TAS2R14-GNAI1 complex, consisting of TAS2R14, GNAI1, GNB1 and GNG2. Component of the TAS2R14-GNAT3 complex, consisting of TAS2R14, GNAT3, GNB1 and GNG2. Component of the TAS2R14-GNAS2 complex, consisting of TAS2R14, GNAS2, GNB1 and GNG2. In terms of processing, phosphorylation at His-266 by NDKB contributes to G protein activation by increasing the high energetic phosphate transfer onto GDP.

Functionally, guanine nucleotide-binding proteins (G proteins) are involved as a modulator or transducer in various transmembrane signaling systems. The beta and gamma chains are required for the GTPase activity, for replacement of GDP by GTP, and for G protein-effector interaction. The polypeptide is Guanine nucleotide-binding protein G(I)/G(S)/G(T) subunit beta-1 (GNB1) (Cricetulus griseus (Chinese hamster)).